Here is a 312-residue protein sequence, read N- to C-terminus: Malate dehydrogenase (312 aa).

NAD(+)-binding positions include 12–17 and aspartate 36; that span reads GAGFTG. Residues arginine 87 and arginine 93 each contribute to the substrate site. Residues asparagine 100 and 123–125 each bind NAD(+); that span reads LTN. Asparagine 125 lines the substrate pocket. Residue serine 149 is modified to Phosphoserine. Arginine 156 lines the substrate pocket. Histidine 180 serves as the catalytic Proton acceptor.

It belongs to the LDH/MDH superfamily. MDH type 3 family.

It catalyses the reaction (S)-malate + NAD(+) = oxaloacetate + NADH + H(+). Catalyzes the reversible oxidation of malate to oxaloacetate. In Geobacillus thermodenitrificans (strain NG80-2), this protein is Malate dehydrogenase.